We begin with the raw amino-acid sequence, 219 residues long: 2-C-methyl-D-erythritol 4-phosphate cytidylyltransferase (219 aa).

It belongs to the IspD/TarI cytidylyltransferase family. IspD subfamily.

The catalysed reaction is 2-C-methyl-D-erythritol 4-phosphate + CTP + H(+) = 4-CDP-2-C-methyl-D-erythritol + diphosphate. It participates in isoprenoid biosynthesis; isopentenyl diphosphate biosynthesis via DXP pathway; isopentenyl diphosphate from 1-deoxy-D-xylulose 5-phosphate: step 2/6. Catalyzes the formation of 4-diphosphocytidyl-2-C-methyl-D-erythritol from CTP and 2-C-methyl-D-erythritol 4-phosphate (MEP). This Bacteroides fragilis (strain ATCC 25285 / DSM 2151 / CCUG 4856 / JCM 11019 / LMG 10263 / NCTC 9343 / Onslow / VPI 2553 / EN-2) protein is 2-C-methyl-D-erythritol 4-phosphate cytidylyltransferase.